Consider the following 556-residue polypeptide: Dihydroxy-acid dehydratase (556 aa).

A Mg(2+)-binding site is contributed by D81. C122 contacts [2Fe-2S] cluster. The Mg(2+) site is built by D123 and K124. K124 is modified (N6-carboxylysine). C196 is a [2Fe-2S] cluster binding site. E444 lines the Mg(2+) pocket. S470 functions as the Proton acceptor in the catalytic mechanism.

It belongs to the IlvD/Edd family. As to quaternary structure, homodimer. It depends on [2Fe-2S] cluster as a cofactor. Mg(2+) serves as cofactor.

It catalyses the reaction (2R)-2,3-dihydroxy-3-methylbutanoate = 3-methyl-2-oxobutanoate + H2O. The enzyme catalyses (2R,3R)-2,3-dihydroxy-3-methylpentanoate = (S)-3-methyl-2-oxopentanoate + H2O. It functions in the pathway amino-acid biosynthesis; L-isoleucine biosynthesis; L-isoleucine from 2-oxobutanoate: step 3/4. Its pathway is amino-acid biosynthesis; L-valine biosynthesis; L-valine from pyruvate: step 3/4. Functionally, functions in the biosynthesis of branched-chain amino acids. Catalyzes the dehydration of (2R,3R)-2,3-dihydroxy-3-methylpentanoate (2,3-dihydroxy-3-methylvalerate) into 2-oxo-3-methylpentanoate (2-oxo-3-methylvalerate) and of (2R)-2,3-dihydroxy-3-methylbutanoate (2,3-dihydroxyisovalerate) into 2-oxo-3-methylbutanoate (2-oxoisovalerate), the penultimate precursor to L-isoleucine and L-valine, respectively. In Syntrophotalea carbinolica (strain DSM 2380 / NBRC 103641 / GraBd1) (Pelobacter carbinolicus), this protein is Dihydroxy-acid dehydratase.